Reading from the N-terminus, the 139-residue chain is Transcription antitermination protein NusB (139 aa).

It belongs to the NusB family.

Its function is as follows. Involved in transcription antitermination. Required for transcription of ribosomal RNA (rRNA) genes. Binds specifically to the boxA antiterminator sequence of the ribosomal RNA (rrn) operons. The polypeptide is Transcription antitermination protein NusB (Escherichia fergusonii (strain ATCC 35469 / DSM 13698 / CCUG 18766 / IAM 14443 / JCM 21226 / LMG 7866 / NBRC 102419 / NCTC 12128 / CDC 0568-73)).